Reading from the N-terminus, the 219-residue chain is 3,4-dihydroxy-2-butanone 4-phosphate synthase (219 aa).

D-ribulose 5-phosphate is bound by residues 28–29 (RE), aspartate 33, 140–144 (REGHT), and glutamate 164. Residue glutamate 29 coordinates Mg(2+). Mg(2+) is bound at residue histidine 143.

This sequence belongs to the DHBP synthase family. In terms of assembly, homodimer. Mg(2+) serves as cofactor. Requires Mn(2+) as cofactor.

The catalysed reaction is D-ribulose 5-phosphate = (2S)-2-hydroxy-3-oxobutyl phosphate + formate + H(+). Its pathway is cofactor biosynthesis; riboflavin biosynthesis; 2-hydroxy-3-oxobutyl phosphate from D-ribulose 5-phosphate: step 1/1. Functionally, catalyzes the conversion of D-ribulose 5-phosphate to formate and 3,4-dihydroxy-2-butanone 4-phosphate. The sequence is that of 3,4-dihydroxy-2-butanone 4-phosphate synthase from Methanocorpusculum labreanum (strain ATCC 43576 / DSM 4855 / Z).